The chain runs to 155 residues: Small ribosomal subunit protein uS7cz/uS7cy (155 aa).

This sequence belongs to the universal ribosomal protein uS7 family. As to quaternary structure, part of the 30S ribosomal subunit.

The protein localises to the plastid. It localises to the chloroplast. Functionally, one of the primary rRNA binding proteins, it binds directly to 16S rRNA where it nucleates assembly of the head domain of the 30S subunit. The sequence is that of Small ribosomal subunit protein uS7cz/uS7cy (rps7-A) from Citrus sinensis (Sweet orange).